Here is a 1357-residue protein sequence, read N- to C-terminus: DNA-directed RNA polymerase subunit beta (1357 aa).

Belongs to the RNA polymerase beta chain family. As to quaternary structure, the RNAP catalytic core consists of 2 alpha, 1 beta, 1 beta' and 1 omega subunit. When a sigma factor is associated with the core the holoenzyme is formed, which can initiate transcription.

The enzyme catalyses RNA(n) + a ribonucleoside 5'-triphosphate = RNA(n+1) + diphosphate. DNA-dependent RNA polymerase catalyzes the transcription of DNA into RNA using the four ribonucleoside triphosphates as substrates. This Pseudomonas fluorescens (strain Pf0-1) protein is DNA-directed RNA polymerase subunit beta.